The sequence spans 392 residues: Probable adenylyltransferase/sulfurtransferase MoeZ (392 aa).

The helical transmembrane segment at Val-45 to Gly-65 threads the bilayer. Residues Gly-52, Asp-73, Ser-80–Arg-84, Lys-97, and Asp-141–Asn-142 each bind ATP. Cys-203 (glycyl thioester intermediate; for adenylyltransferase activity) is an active-site residue. The Rhodanese domain maps to Ser-300–Val-390. The active-site Cysteine persulfide intermediate; for sulfurtransferase activity is Cys-350.

This sequence in the N-terminal section; belongs to the HesA/MoeB/ThiF family.

It localises to the membrane. In terms of biological role, catalyzes the conversion of the sulfur carrier protein CysO to CysO-thiocarboxylate. The reaction is thought to proceed in two steps: first, ATP-dependent activation of CysO as acyl-adenylate (CysO-COOAMP), followed by sulfur transfer to give CysO-thiocarboxylate (CysO-COSH). The chain is Probable adenylyltransferase/sulfurtransferase MoeZ (moeZ) from Mycobacterium tuberculosis (strain CDC 1551 / Oshkosh).